The primary structure comprises 635 residues: 5-aminolevulinate synthase, non-specific, mitochondrial (635 aa).

Residues 1–56 (MEAVVRRCPFLARVSQAFLQKAGPSLLFYAQHCPKMMEAAPPAAARGLATSASRGQ) constitute a mitochondrion transit peptide. The span at 44 to 66 (AARGLATSASRGQQVEETPAAQP) shows a compositional bias: low complexity. A disordered region spans residues 44-94 (AARGLATSASRGQQVEETPAAQPEAKKAKEVAQQNTDGSQPPAGHPPAAAV). Substrate-binding residues include Arg212, Ser329, and Lys348. Positions 381, 409, and 437 each coordinate pyridoxal 5'-phosphate. Residue Lys440 is part of the active site. Lys440 carries the N6-(pyridoxal phosphate)lysine modification. Thr469 and Thr470 together coordinate pyridoxal 5'-phosphate. Residue Thr557 participates in substrate binding.

It belongs to the class-II pyridoxal-phosphate-dependent aminotransferase family. In terms of assembly, homodimer. Requires pyridoxal 5'-phosphate as cofactor. As to expression, ubiquitous.

It localises to the mitochondrion inner membrane. The enzyme catalyses succinyl-CoA + glycine + H(+) = 5-aminolevulinate + CO2 + CoA. Its pathway is porphyrin-containing compound metabolism; protoporphyrin-IX biosynthesis; 5-aminolevulinate from glycine: step 1/1. In terms of biological role, catalyzes the pyridoxal 5'-phosphate (PLP)-dependent condensation of succinyl-CoA and glycine to form aminolevulinic acid (ALA), with CoA and CO2 as by-products. The chain is 5-aminolevulinate synthase, non-specific, mitochondrial (ALAS1) from Gallus gallus (Chicken).